A 323-amino-acid chain; its full sequence is Protein REDOX 2 (323 aa).

D53 contributes to the NADP(+) binding site. The Proton donor role is filled by Y58. H121 is a binding site for substrate. NADP(+)-binding positions include 167 to 168, Q189, 215 to 220, and 289 to 297; these read SN, WSPLLS, and DQIHEIPQR. A disordered region spans residues 302–323; it reads GEEFMHPEGPIKSPEELWDGDL.

Belongs to the aldo/keto reductase family. In terms of assembly, monomer. As to expression, expressed in leaf epidermis.

The enzyme catalyses 15alpha-stemmadenine + NADP(+) = 17-dehydrostemmadenine + NADPH + 2 H(+). The protein operates within alkaloid biosynthesis. Functionally, component of iboga and aspidosperma monoterpenoid indole alkaloids (MIAs, e.g. tabersonine and catharanthine) biosynthesis pathway from 19E-geissoschizine. Catalyzes the second oxidation step of the unstable intermediate product resulting from the reaction triggered by the geissoschizine oxidase (GO) in the stemmadenine biosynthesis process from 19E-geissoschizine. This chain is Protein REDOX 2, found in Catharanthus roseus (Madagascar periwinkle).